Reading from the N-terminus, the 97-residue chain is Integration host factor subunit alpha (97 aa).

Residues 49–71 (FGNFDLRDKNQRPGRNPKTGEDI) form a disordered region.

It belongs to the bacterial histone-like protein family. In terms of assembly, heterodimer of an alpha and a beta chain.

Its function is as follows. This protein is one of the two subunits of integration host factor, a specific DNA-binding protein that functions in genetic recombination as well as in transcriptional and translational control. The protein is Integration host factor subunit alpha of Shewanella woodyi (strain ATCC 51908 / MS32).